Reading from the N-terminus, the 171-residue chain is Prolyl-tRNA synthetase associated domain-containing protein 1 (171 aa).

Belongs to the PRORSD1 family.

The protein is Prolyl-tRNA synthetase associated domain-containing protein 1 (PRORSD1) of Bos taurus (Bovine).